The sequence spans 488 residues: Glutamyl-tRNA(Gln) amidotransferase subunit A (488 aa).

Residues Lys77 and Ser152 each act as charge relay system in the active site. Ser176 serves as the catalytic Acyl-ester intermediate.

It belongs to the amidase family. GatA subfamily. Heterotrimer of A, B and C subunits.

It catalyses the reaction L-glutamyl-tRNA(Gln) + L-glutamine + ATP + H2O = L-glutaminyl-tRNA(Gln) + L-glutamate + ADP + phosphate + H(+). Allows the formation of correctly charged Gln-tRNA(Gln) through the transamidation of misacylated Glu-tRNA(Gln) in organisms which lack glutaminyl-tRNA synthetase. The reaction takes place in the presence of glutamine and ATP through an activated gamma-phospho-Glu-tRNA(Gln). This is Glutamyl-tRNA(Gln) amidotransferase subunit A from Streptococcus suis (strain 05ZYH33).